The following is a 116-amino-acid chain: MKVLSLLYLLTAIPGILSDVQLQESGPGLVKPSQSLSLTCSVTGYSITSGYYWNWIRQFPGNKLEWMGYISYDGSNNYNPSLKNRISITRDTSKNQFFLKLNSVTTEDTATYYCAR.

The N-terminal stretch at 1 to 18 is a signal peptide; it reads MKVLSLLYLLTAIPGILS. Residues 19 to 48 are framework-1; the sequence is DVQLQESGPGLVKPSQSLSLTCSVTGYSIT. Cysteine 40 and cysteine 114 are joined by a disulfide. The tract at residues 49 to 53 is complementarity-determining-1; it reads SGYYW. The framework-2 stretch occupies residues 54–67; the sequence is NWIRQFPGNKLEWM. Positions 68-84 are complementarity-determining-2; the sequence is GYISYDGSNNYNPSLKN. A framework-3 region spans residues 85–116; sequence RISITRDTSKNQFFLKLNSVTTEDTATYYCAR.

The chain is Ig heavy chain V region 3-6 (Ighv3-6) from Mus musculus (Mouse).